The chain runs to 116 residues: Aspartate 1-decarboxylase (116 aa).

Catalysis depends on Ser-25, which acts as the Schiff-base intermediate with substrate; via pyruvic acid. A Pyruvic acid (Ser) modification is found at Ser-25. A substrate-binding site is contributed by Thr-57. Tyr-58 functions as the Proton donor in the catalytic mechanism. 73-75 provides a ligand contact to substrate; the sequence is GAA.

Belongs to the PanD family. Heterooctamer of four alpha and four beta subunits. Pyruvate serves as cofactor. Post-translationally, is synthesized initially as an inactive proenzyme, which is activated by self-cleavage at a specific serine bond to produce a beta-subunit with a hydroxyl group at its C-terminus and an alpha-subunit with a pyruvoyl group at its N-terminus.

The protein resides in the cytoplasm. It carries out the reaction L-aspartate + H(+) = beta-alanine + CO2. Its pathway is cofactor biosynthesis; (R)-pantothenate biosynthesis; beta-alanine from L-aspartate: step 1/1. Functionally, catalyzes the pyruvoyl-dependent decarboxylation of aspartate to produce beta-alanine. The chain is Aspartate 1-decarboxylase from Leptospira interrogans serogroup Icterohaemorrhagiae serovar copenhageni (strain Fiocruz L1-130).